The sequence spans 344 residues: Photosystem II protein D1 (344 aa).

3 helical membrane passes run 29 to 46 (YIGW…TATT), 118 to 133 (HFFI…EWEL), and 142 to 156 (WIAV…AATA). H118 provides a ligand contact to chlorophyll a. Y126 is a binding site for pheophytin a. D170 and E189 together coordinate [CaMn4O5] cluster. Residues 197-218 (FHMLGVAGVFGGSLFSAMHGSL) form a helical membrane-spanning segment. Position 198 (H198) interacts with chlorophyll a. A quinone is bound by residues H215 and 264–265 (SF). H215 is a binding site for Fe cation. Residue H272 participates in Fe cation binding. A helical membrane pass occupies residues 274–288 (FLAAWPVIGIWFTAM). Residues H332, E333, D342, and A344 each coordinate [CaMn4O5] cluster.

Belongs to the reaction center PufL/M/PsbA/D family. PSII is composed of 1 copy each of membrane proteins PsbA, PsbB, PsbC, PsbD, PsbE, PsbF, PsbH, PsbI, PsbJ, PsbK, PsbL, PsbM, PsbT, PsbY, PsbZ, Psb30/Ycf12, at least 3 peripheral proteins of the oxygen-evolving complex and a large number of cofactors. It forms dimeric complexes. Requires The D1/D2 heterodimer binds P680, chlorophylls that are the primary electron donor of PSII, and subsequent electron acceptors. It shares a non-heme iron and each subunit binds pheophytin, quinone, additional chlorophylls, carotenoids and lipids. D1 provides most of the ligands for the Mn4-Ca-O5 cluster of the oxygen-evolving complex (OEC). There is also a Cl(-1) ion associated with D1 and D2, which is required for oxygen evolution. The PSII complex binds additional chlorophylls, carotenoids and specific lipids. as cofactor. In terms of processing, tyr-161 forms a radical intermediate that is referred to as redox-active TyrZ, YZ or Y-Z.

Its subcellular location is the plastid. The protein localises to the chloroplast thylakoid membrane. The catalysed reaction is 2 a plastoquinone + 4 hnu + 2 H2O = 2 a plastoquinol + O2. Its function is as follows. Photosystem II (PSII) is a light-driven water:plastoquinone oxidoreductase that uses light energy to abstract electrons from H(2)O, generating O(2) and a proton gradient subsequently used for ATP formation. It consists of a core antenna complex that captures photons, and an electron transfer chain that converts photonic excitation into a charge separation. The D1/D2 (PsbA/PsbD) reaction center heterodimer binds P680, the primary electron donor of PSII as well as several subsequent electron acceptors. The polypeptide is Photosystem II protein D1 (Bigelowiella natans (Pedinomonas minutissima)).